Reading from the N-terminus, the 199-residue chain is Large ribosomal subunit protein bL25 (199 aa).

The segment at 1 to 21 (MNIEKTLSVQKREGYGKGPSG) is disordered.

This sequence belongs to the bacterial ribosomal protein bL25 family. CTC subfamily. In terms of assembly, part of the 50S ribosomal subunit; part of the 5S rRNA/L5/L18/L25 subcomplex. Contacts the 5S rRNA. Binds to the 5S rRNA independently of L5 and L18.

Functionally, this is one of the proteins that binds to the 5S RNA in the ribosome where it forms part of the central protuberance. The chain is Large ribosomal subunit protein bL25 from Desulfovibrio desulfuricans (strain ATCC 27774 / DSM 6949 / MB).